Consider the following 263-residue polypeptide: MSYLHAIILGIVEGITEFLPISSTGHMIIASSMMGIEDSSFTKAFEVIIQFGAIMSVLVLYWKRFLPHWGFYRKLFVAFLPTAIIGFVVKDVVEHLMGSVQVVAWSLIIGGVILIWADKAFAHLTMMGRKTDDLTYKDSVKLGLFQAIAMIPGVSRSGATIMGGLTLGMNKKEAAEFSFFLAVPTMAAATLYKLLKIYKTIEPAQINLLLVGCAVAFVVAMIAIKFFIGIVSRYGFRGFGYYRIVLGLVILILLYTGHDLQMV.

8 helical membrane-spanning segments follow: residues 1-21 (MSYL…FLPI), 41-61 (FTKA…LVLY), 69-89 (WGFY…GFVV), 96-116 (LMGS…ILIW), 147-167 (AIAM…GLTL), 177-197 (FSFF…LLKI), 208-228 (LLLV…KFFI), and 238-258 (GFGY…YTGH).

Belongs to the UppP family.

It is found in the cell inner membrane. It catalyses the reaction di-trans,octa-cis-undecaprenyl diphosphate + H2O = di-trans,octa-cis-undecaprenyl phosphate + phosphate + H(+). In terms of biological role, catalyzes the dephosphorylation of undecaprenyl diphosphate (UPP). Confers resistance to bacitracin. The protein is Undecaprenyl-diphosphatase of Bdellovibrio bacteriovorus (strain ATCC 15356 / DSM 50701 / NCIMB 9529 / HD100).